Here is a 149-residue protein sequence, read N- to C-terminus: UPF0260 protein Avin_32930 (149 aa).

It belongs to the UPF0260 family.

In Azotobacter vinelandii (strain DJ / ATCC BAA-1303), this protein is UPF0260 protein Avin_32930.